The chain runs to 461 residues: Transforming growth factor beta-1-induced transcript 1 protein (461 aa).

N-acetylmethionine is present on Met1. Residues 1–86 (MEDLDALLSD…PPFSSSSGVL (86 aa)) are disordered. Residues 1–200 (MEDLDALLSD…GCPSPPGQTN (200 aa)) form a transcription activation region. Residues 1 to 240 (MEDLDALLSD…CNKPIAGQVV (240 aa)) are interaction with PTK2B/PYK2. The LD motif 1 motif lies at 3–15 (DLDALLSDLETTT). Thr33 carries the post-translational modification Phosphothreonine. At Tyr38 the chain carries Phosphotyrosine. The segment covering 41–52 (QPQTGSGESSGA) has biased composition (polar residues). Phosphotyrosine; by FAK2 and FYN is present on Tyr60. Ser68 is modified (phosphoserine). The span at 69–83 (PKSVAPVAPPFSSSS) shows a compositional bias: low complexity. Positions 83 to 136 (SGVLGNGLCELDRLLQELNATQFNITDEIMSQFPSSKMAEGEGKEDQSEDKSIT) are interaction with PTK2/FAK1. The short motif at 92–104 (ELDRLLQELNATQ) is the LD motif 2 element. Positions 116–154 (PSSKMAEGEGKEDQSEDKSITTVPSSTFPAPSKPSATSA) are disordered. The span at 121–134 (AEGEGKEDQSEDKS) shows a compositional bias: basic and acidic residues. Polar residues predominate over residues 135–154 (ITTVPSSTFPAPSKPSATSA). Ser140, Ser141, Ser164, and Ser186 each carry phosphoserine. Positions 157-168 (ELDRLMASLSDF) match the LD motif 3 motif. The segment at 171–204 (QNHLPASGPPQPPAVSPTREGCPSPPGQTNKGSL) is disordered. Thr188 carries the phosphothreonine modification. Ser194 is subject to Phosphoserine. The LD motif 4 motif lies at 203–215 (SLDTMLGLLQSDL). LIM zinc-binding domains are found at residues 226–285 (GLCG…RFSP), 286–343 (RCGF…QLFA), 344–403 (PRCQ…QRGS), and 404–461 (LCAT…KLFG). The residue at position 403 (Ser403) is a Phosphoserine. At Thr407 the chain carries Phosphothreonine.

The protein belongs to the paxillin family. In terms of assembly, homooligomer. Interacts with PPARG. Interacts with TRAF4. Interacts with CRIP2. Interacts with HSPB1. Interacts with ILK. Interacts with LIMS1 and LIMS2. Interacts with NCK2. Interacts with NUDT16L1. Interacts with PAK. Interacts with PTPN12. Interacts with TCF3. Interacts with TCF7L2. Interacts with VCL. Interacts (via LD motif 3) with GIT1. Also interacts with GIT2. Forms a complex with ARHGEF7. Interacts with AR/androgen receptor in a ligand-dependent manner. Interacts with CSK. Interacts with PTK2/FAK1 and PTK2B/PYK2. Interacts with SLC6A3 and SLC6A4. Interacts with NR3C1. Interacts with SMAD3. Interacts with MAPK15. Interacts with SRC. Interacts with LYN. Interacts with talin. Interacts (via LIM zinc-binding domain 2) with CBLC (via RING-type zinc finger); the interaction is direct and enhances CBLC E3 ubiquitin-protein ligase activity. Interacts with PARVA. Interacts with PXN. In terms of processing, phosphorylated by gonadotropin-releasing hormone-activated SRC. As to expression, strongly expressed in large intestine, lung, spleen, testis, uterus and to a lower extent in brain, kidney and liver (at protein level). In brain, expressed by neuronal and non neuronal cells (at protein level).

It is found in the cell junction. The protein localises to the focal adhesion. Its subcellular location is the nucleus matrix. The protein resides in the cytoplasm. It localises to the cytoskeleton. In terms of biological role, functions as a molecular adapter coordinating multiple protein-protein interactions at the focal adhesion complex and in the nucleus. Links various intracellular signaling modules to plasma membrane receptors and regulates the Wnt and TGFB signaling pathways. May also regulate SLC6A3 and SLC6A4 targeting to the plasma membrane hence regulating their activity. In the nucleus, functions as a nuclear receptor coactivator regulating glucocorticoid, androgen, mineralocorticoid and progesterone receptor transcriptional activity. May play a role in the processes of cell growth, proliferation, migration, differentiation and senescence. May have a zinc-dependent DNA-binding activity. The protein is Transforming growth factor beta-1-induced transcript 1 protein (Tgfb1i1) of Rattus norvegicus (Rat).